Reading from the N-terminus, the 607-residue chain is Coronin-like protein cor-1 (607 aa).

3 WD repeats span residues 77–117, 127–167, and 170–209; these read AHKA…LNRN, GHQK…ALLE, and GHPD…VVHE. The interval 415–564 is disordered; the sequence is PTAAESVPTQ…VSAASDVGHV (150 aa). Positions 424 to 436 are enriched in low complexity; that stretch reads QSYSERPPSSQQP. Residues 437 to 447 show a composition bias toward pro residues; sequence SPRPSASPRPR. Basic and acidic residues-rich tracts occupy residues 473 to 489 and 517 to 533; these read SRTE…DPMK and AAAE…RTAD. Residues 544–559 show a composition bias toward low complexity; that stretch reads SSRASASPRGSVSAAS. Positions 563–602 form a coiled coil; that stretch reads HVPQNMDELLEDLMKMKAVLRQHERRIRMLEEEIADRNMS.

It belongs to the WD repeat coronin family.

The protein localises to the cytoplasm. It is found in the cytoskeleton. Functionally, required to direct the migration of Q neuroblasts along the anterior axis of the body during larval development. This is dependent on its asymmetric expression in Q neuroblasts. The chain is Coronin-like protein cor-1 (cor-1) from Caenorhabditis elegans.